We begin with the raw amino-acid sequence, 1234 residues long: MSKERPKRNIIQKKYDDSDGIPWSEERVVRKVLYLSLKEFKNAQKRQHGEGLAGSLKAVNGLLGNAQAKALGPASEQSENEKDDASQVSSTSNDVSSSDFEEGPSRKRPRLQAQRKFAQSQPNSPSTTPVKIVEPLLPPPATQISDLSKRKPKTEDFLTFLCLRGSPALPNSMVYFGSSQDEEDVEEEDDETEDVKATTNNASSSCQSTPRKGKTHKHVHNGHVFNGSSRSAREKEPAHKHRSKEATPGKEKHSEPRADSRREQASGAQPTAASAAASSAKGLAANHQPPPSHRSAQDLRKQVSKVNGVTRMSSLGAGTNSAKKIREVRPSPSKTVKYTATVTKGTVTYTKAKRELVKETKPNHHKPSSAVNHTISGKTESSNAKTRKQVLSLGGASKSTGPAASGLKASSRLNPKSCTKEVGGRQLREGLRNSKRRLEEAQQVDKPQSPPKKMKGVAGNAEAPGKKASAASGEKSLLNGHVKKEVPERSLERNRPKRAAAGKNMLGKQAHGKTEGTPCENRSTSQPESSHKPHDPQGKPEKGSGKSGWAAMDEIPVLRPSAKEFHDPLIYIESVRAQVEKYGMCRVIPPPDWRPECKLNDEMRFVTQIQHIHKLGRRWGPNVQRLACIKKHLRSQGITMDELPLIGGCELDLACFFRLINEMGGMQQVTDLKKWNKLADMLRIPKTAQDRLAKLQEAYCQYLLSYDSLSPEEHRRLEKEVLMEKEILEKRKGPLEGHTESDHHKFHSLPRFEPKNGLVHGVTPRNGFRSKLKEVGRAPLKTGRRRLFAQEKEVVKEEEEDKGVLNDFHKCIYKGRSVSLTTFYRTARNIMNMCFSKEPAPAEIEQEYWRLVEEKDCHVAVHCGKVDTNTHGSGFPVGKSEPFSRHGWNLTVLPNNTGSILRHLGAVPGVTIPWLNIGMVFSTSCWSRDQNHLPYIDYLHTGADCIWYCIPAEEENKLEDVVHTLLQGNGTPGLQMLESNVMISPEVLCKKGIKVHRTVQQSGQFVVCFPGSFVSKVCCGYNVSETVHFATTQWTSMGFETAKEMKRRHIAKPFSMEKLLYQIAQAEAKKENGPTLSTISALLDELRDTELRQRRLLFEAGLHSSARYGSHDGNSTVADGKKKPRKWLQLETSERRCQICQHLCYLSMVVQENENVVFCLECALRHVEKQKSCRGLKLMYRYDEEQIISLVNQICGKVSGKHGGIENCLNKPTPKRGPRKRATVDVPPSRLPSS.

Positions 1 to 11 are enriched in basic residues; it reads MSKERPKRNII. 4 disordered regions span residues 1–22, 68–150, 169–339, and 354–548; these read MSKERPKRNIIQKKYDDSDGIP, AKAL…LSKR, LPNS…VKYT, and RELV…GKSG. Serine 78 is subject to Phosphoserine. The segment covering 86 to 98 has biased composition (low complexity); the sequence is SQVSSTSNDVSSS. The Nuclear localization signal motif lies at 104–110; sequence PSRKRPR. Residues 117–129 show a composition bias toward polar residues; it reads FAQSQPNSPSTTP. The interval 141 to 170 is sufficient for interaction with the PRC2 complex; the sequence is ATQISDLSKRKPKTEDFLTFLCLRGSPALP. Acidic residues predominate over residues 180-193; it reads QDEEDVEEEDDETE. Residues 197–210 are compositionally biased toward polar residues; sequence ATTNNASSSCQSTP. The span at 211–221 shows a compositional bias: basic residues; that stretch reads RKGKTHKHVHN. Positions 244-264 are enriched in basic and acidic residues; it reads KEATPGKEKHSEPRADSRREQ. Low complexity predominate over residues 265–285; that stretch reads ASGAQPTAASAAASSAKGLAA. 2 stretches are compositionally biased toward polar residues: residues 304-322 and 369-384; these read SKVNGVTRMSSLGAGTNSA and SAVNHTISGKTESSNA. Position 378 is an N6-acetyllysine (lysine 378). A compositionally biased stretch (basic and acidic residues) spans 418–440; sequence CTKEVGGRQLREGLRNSKRRLEE. The residue at position 449 (serine 449) is a Phosphoserine. 2 stretches are compositionally biased toward basic and acidic residues: residues 482–494 and 529–544; these read VKKEVPERSLERN and SSHKPHDPQGKPEKGS. Residues 555-596 form the JmjN domain; sequence IPVLRPSAKEFHDPLIYIESVRAQVEKYGMCRVIPPPDWRPE. Positions 619-711 constitute an ARID domain; that stretch reads WGPNVQRLAC…YLLSYDSLSP (93 aa). A GSGFP motif motif is present at residues 872–876; that stretch reads GSGFP. The 165-residue stretch at 882 to 1046 folds into the JmjC domain; the sequence is PFSRHGWNLT…MGFETAKEMK (165 aa). Residues 1206-1234 form a disordered region; it reads ENCLNKPTPKRGPRKRATVDVPPSRLPSS.

This sequence belongs to the JARID2 family. As to quaternary structure, associates with the PRC2 complex, which consists of the core components EED, EZH1 or EZH2, SUZ12, and RBBP4, and various combinations of accessory subunits including AEBP2, JARID2, PHF19, MTF2 and EPOP. Found in a monomeric PRC2.2 (class 2) complex consisting of at least SUZ12, RBBP4, AEBP2 and JARID2. Facilitates nucleosome binding of the PRC2 complex. Interacts with SUZ12 (via C2H2-type zinc finger domain); the interaction is direct; competes with EPOP for SUZ12 binding. Interacts with histone methyltransferases EHMT1/GLP1 and EHMT2/G9a. Interacts with GATA4 (via the N-terminal region). Interacts with NKX2-5 (via the C-terminal region). Interacts with RB1. Interacts with ZNF496. Interacts with ESRRB. Interacts with DDX18; this interaction inhibits the PRC2 complex. In terms of tissue distribution, widely expressed in embryos. In adults, expressed at high levels in heart, skeletal muscle, brain and thymus.

The protein resides in the nucleus. Functionally, regulator of histone methyltransferase complexes that plays an essential role in embryonic development, including heart and liver development, neural tube fusion process and hematopoiesis. Acts as an accessory subunit for the core PRC2 (Polycomb repressive complex 2) complex, which mediates histone H3K27 (H3K27me3) trimethylation on chromatin. Binds DNA and mediates the recruitment of the PRC2 complex to target genes in embryonic stem cells, thereby playing a key role in stem cell differentiation and normal embryonic development. In cardiac cells, it is required to repress expression of cyclin-D1 (CCND1) by activating methylation of 'Lys-9' of histone H3 (H3K9me) by the GLP1/EHMT1 and G9a/EHMT2 histone methyltransferases. Also acts as a transcriptional repressor of ANF via its interaction with GATA4 and NKX2-5. Participates in the negative regulation of cell proliferation signaling. Does not have histone demethylase activity. The protein is Protein Jumonji (Jarid2) of Mus musculus (Mouse).